We begin with the raw amino-acid sequence, 560 residues long: Trans-activating transcriptional regulatory protein (560 aa).

Positions 106 to 133 (DSMKRKASELDSDSDSGESSKGKKRVIK) are disordered.

This sequence belongs to the nucleopolyhedrovirus IE-1 protein family.

Functionally, regulatory transcriptional protein, which trans-activates gene expression from early baculovirus promoters. Can also trans-activate its own promoter, suggesting that it is autoregulated during normal infection of insect cells. The sequence is that of Trans-activating transcriptional regulatory protein (IE1) from Choristoneura fumiferana nuclear polyhedrosis virus (CfMNPV).